The following is a 375-amino-acid chain: Zinc finger CCCH domain-containing protein 57 (375 aa).

C3H1-type zinc fingers lie at residues 42–70 (RHGE…HPHD), 87–115 (RIGQ…HPRN), 133–161 (RPNE…HPQT), 243–271 (RPGQ…HPRD), and 289–317 (RPGE…HPMR). The segment at 352–375 (SVEAKPTSLPETTSAKDTIVDAQH) is disordered.

It is found in the nucleus. This is Zinc finger CCCH domain-containing protein 57 (ZFN3) from Arabidopsis thaliana (Mouse-ear cress).